The sequence spans 247 residues: MSPNPTSEFKQIIEQQSEKILNPIERTKVTQDLSENVILTTVDDLYNWARLSSLWPMLYGTACCFIEFAALIGSRFDFDRFGLVPRSSPRQADLIITAGTITMKMAPALVRLYEEMPEPKYVIAMGACTITGGMFSSDSTTAVRGVDKLIPVDVYIPGCPPRPEAIIDAIIKLRKKVANESIQERGTVLQQTNRYYSTTHKMQATEPILTGKYLQSATRQAPPKELLEATGMPVPPALLTTKQKEEI.

Residues C63, C64, C128, and C159 each coordinate [4Fe-4S] cluster.

This sequence belongs to the complex I 20 kDa subunit family. In terms of assembly, NDH-1 can be composed of about 15 different subunits; different subcomplexes with different compositions have been identified which probably have different functions. Requires [4Fe-4S] cluster as cofactor.

The protein localises to the cellular thylakoid membrane. It carries out the reaction a plastoquinone + NADH + (n+1) H(+)(in) = a plastoquinol + NAD(+) + n H(+)(out). The enzyme catalyses a plastoquinone + NADPH + (n+1) H(+)(in) = a plastoquinol + NADP(+) + n H(+)(out). Its function is as follows. NDH-1 shuttles electrons from an unknown electron donor, via FMN and iron-sulfur (Fe-S) centers, to quinones in the respiratory and/or the photosynthetic chain. The immediate electron acceptor for the enzyme in this species is believed to be plastoquinone. Couples the redox reaction to proton translocation, and thus conserves the redox energy in a proton gradient. Cyanobacterial NDH-1 also plays a role in inorganic carbon-concentration. This is NAD(P)H-quinone oxidoreductase subunit K from Microcystis aeruginosa (strain NIES-843 / IAM M-2473).